The chain runs to 98 residues: Aspartyl/glutamyl-tRNA(Asn/Gln) amidotransferase subunit C (98 aa).

The interval 75–98 is disordered; it reads AQALSGAPAQEQQRFKVPQILGED.

Belongs to the GatC family. In terms of assembly, heterotrimer of A, B and C subunits.

The enzyme catalyses L-glutamyl-tRNA(Gln) + L-glutamine + ATP + H2O = L-glutaminyl-tRNA(Gln) + L-glutamate + ADP + phosphate + H(+). The catalysed reaction is L-aspartyl-tRNA(Asn) + L-glutamine + ATP + H2O = L-asparaginyl-tRNA(Asn) + L-glutamate + ADP + phosphate + 2 H(+). Functionally, allows the formation of correctly charged Asn-tRNA(Asn) or Gln-tRNA(Gln) through the transamidation of misacylated Asp-tRNA(Asn) or Glu-tRNA(Gln) in organisms which lack either or both of asparaginyl-tRNA or glutaminyl-tRNA synthetases. The reaction takes place in the presence of glutamine and ATP through an activated phospho-Asp-tRNA(Asn) or phospho-Glu-tRNA(Gln). The sequence is that of Aspartyl/glutamyl-tRNA(Asn/Gln) amidotransferase subunit C from Streptomyces griseus subsp. griseus (strain JCM 4626 / CBS 651.72 / NBRC 13350 / KCC S-0626 / ISP 5235).